Consider the following 73-residue polypeptide: MAKKQGAIEIEGTVVESLPNAMFKVELQNGHQVLAHISGKMRMHYIRILPDDRVVVELSPYDLTRGRIVYRYK.

One can recognise an S1-like domain in the interval 1–73 (MAKKQGAIEI…TRGRIVYRYK (73 aa)).

The protein belongs to the IF-1 family. In terms of assembly, component of the 30S ribosomal translation pre-initiation complex which assembles on the 30S ribosome in the order IF-2 and IF-3, IF-1 and N-formylmethionyl-tRNA(fMet); mRNA recruitment can occur at any time during PIC assembly.

Its subcellular location is the cytoplasm. In terms of biological role, one of the essential components for the initiation of protein synthesis. Stabilizes the binding of IF-2 and IF-3 on the 30S subunit to which N-formylmethionyl-tRNA(fMet) subsequently binds. Helps modulate mRNA selection, yielding the 30S pre-initiation complex (PIC). Upon addition of the 50S ribosomal subunit IF-1, IF-2 and IF-3 are released leaving the mature 70S translation initiation complex. This is Translation initiation factor IF-1 from Streptomyces coelicolor (strain ATCC BAA-471 / A3(2) / M145).